The chain runs to 492 residues: Glutamyl-tRNA(Gln) amidotransferase subunit A (492 aa).

Catalysis depends on charge relay system residues Lys-78 and Ser-158. Ser-182 functions as the Acyl-ester intermediate in the catalytic mechanism.

It belongs to the amidase family. GatA subfamily. In terms of assembly, heterotrimer of A, B and C subunits.

It carries out the reaction L-glutamyl-tRNA(Gln) + L-glutamine + ATP + H2O = L-glutaminyl-tRNA(Gln) + L-glutamate + ADP + phosphate + H(+). Its function is as follows. Allows the formation of correctly charged Gln-tRNA(Gln) through the transamidation of misacylated Glu-tRNA(Gln) in organisms which lack glutaminyl-tRNA synthetase. The reaction takes place in the presence of glutamine and ATP through an activated gamma-phospho-Glu-tRNA(Gln). This is Glutamyl-tRNA(Gln) amidotransferase subunit A from Rhodopseudomonas palustris (strain BisB5).